Here is a 216-residue protein sequence, read N- to C-terminus: Somatotropin (216 aa).

The first 26 residues, M1–A26, serve as a signal peptide directing secretion. A Zn(2+)-binding site is contributed by H45. C78 and C189 are joined by a disulfide. Residue S131 is modified to Phosphoserine. E198 is a Zn(2+) binding site. Cysteines 206 and 214 form a disulfide.

Belongs to the somatotropin/prolactin family.

It is found in the secreted. Plays an important role in growth control. Its major role in stimulating body growth is to stimulate the liver and other tissues to secrete IGF1. It stimulates both the differentiation and proliferation of myoblasts. It also stimulates amino acid uptake and protein synthesis in muscle and other tissues. In Neovison vison (American mink), this protein is Somatotropin (GH1).